Here is a 665-residue protein sequence, read N- to C-terminus: Transketolase (665 aa).

Residue His26 participates in substrate binding. Residues His66 and Gly114–Leu116 contribute to the thiamine diphosphate site. Asp155 is a binding site for Mg(2+). Gly156 and Asn185 together coordinate thiamine diphosphate. Mg(2+)-binding residues include Asn185 and Ile187. Residues His261, Arg358, and Ser385 each coordinate substrate. His261 is a thiamine diphosphate binding site. Glu411 serves as the catalytic Proton donor. Phe437 provides a ligand contact to thiamine diphosphate. Substrate is bound by residues His461, Asp469, and Arg520.

This sequence belongs to the transketolase family. As to quaternary structure, homodimer. It depends on Mg(2+) as a cofactor. The cofactor is Ca(2+). Mn(2+) serves as cofactor. Requires Co(2+) as cofactor. Thiamine diphosphate is required as a cofactor.

The enzyme catalyses D-sedoheptulose 7-phosphate + D-glyceraldehyde 3-phosphate = aldehydo-D-ribose 5-phosphate + D-xylulose 5-phosphate. Catalyzes the transfer of a two-carbon ketol group from a ketose donor to an aldose acceptor, via a covalent intermediate with the cofactor thiamine pyrophosphate. The protein is Transketolase (tkt) of Buchnera aphidicola subsp. Schizaphis graminum (strain Sg).